The chain runs to 849 residues: Serrate RNA effector molecule homolog A (849 aa).

Disordered stretches follow at residues 1 to 90 (MADS…HGSD) and 276 to 409 (KREA…PRPL). Composition is skewed to basic and acidic residues over residues 8-73 (YDRR…RHDL), 276-306 (KREA…KPEN), and 314-342 (EKPV…ETRK). The span at 354–364 (SDDGSDSESDT) shows a compositional bias: acidic residues. Basic and acidic residues predominate over residues 381-405 (RAEETPKKEEDTEKQKEKQKEDTVK).

The protein belongs to the ARS2 family. As to quaternary structure, interacts ncbp1/cbp80.

It localises to the nucleus. The protein resides in the nucleoplasm. Its subcellular location is the cytoplasm. Its function is as follows. Acts as a mediator between the cap-binding complex (CBC) and the primary microRNAs (miRNAs) processing machinery during cell proliferation. Contributes to the stability and delivery of capped primary miRNA transcripts to the primary miRNA processing complex, thereby playing a role in RNA-mediated gene silencing (RNAi) by miRNAs. This Xenopus laevis (African clawed frog) protein is Serrate RNA effector molecule homolog A (srrt-a).